Consider the following 380-residue polypeptide: 3-dehydroquinate synthase (380 aa).

Belongs to the archaeal-type DHQ synthase family.

The enzyme catalyses 2-amino-2,3,7-trideoxy-D-lyxo-hept-6-ulosonate + NAD(+) + H2O = 3-dehydroquinate + NH4(+) + NADH + H(+). In terms of biological role, catalyzes the oxidative deamination and cyclization of 2-amino-3,7-dideoxy-D-threo-hept-6-ulosonic acid (ADH) to yield 3-dehydroquinate (DHQ), which is fed into the canonical shikimic pathway of aromatic amino acid biosynthesis. The chain is 3-dehydroquinate synthase from Methanosarcina barkeri (strain Fusaro / DSM 804).